A 283-amino-acid chain; its full sequence is Pantothenate synthetase (283 aa).

30–37 (MGNLHDGH) is a binding site for ATP. Residue H37 is the Proton donor of the active site. Q61 serves as a coordination point for (R)-pantoate. Residue Q61 coordinates beta-alanine. 149-152 (GEKD) lines the ATP pocket. (R)-pantoate is bound at residue Q155. An ATP-binding site is contributed by 186–189 (LSSR).

This sequence belongs to the pantothenate synthetase family. Homodimer.

It localises to the cytoplasm. The enzyme catalyses (R)-pantoate + beta-alanine + ATP = (R)-pantothenate + AMP + diphosphate + H(+). It functions in the pathway cofactor biosynthesis; (R)-pantothenate biosynthesis; (R)-pantothenate from (R)-pantoate and beta-alanine: step 1/1. Its function is as follows. Catalyzes the condensation of pantoate with beta-alanine in an ATP-dependent reaction via a pantoyl-adenylate intermediate. The chain is Pantothenate synthetase from Escherichia coli (strain SMS-3-5 / SECEC).